Reading from the N-terminus, the 511-residue chain is L-arabinose isomerase (511 aa).

Mn(2+)-binding residues include Glu316, Glu343, His360, and His459.

Belongs to the arabinose isomerase family. Mn(2+) is required as a cofactor.

It catalyses the reaction beta-L-arabinopyranose = L-ribulose. It participates in carbohydrate degradation; L-arabinose degradation via L-ribulose; D-xylulose 5-phosphate from L-arabinose (bacterial route): step 1/3. Functionally, catalyzes the conversion of L-arabinose to L-ribulose. In Arthrobacter sp. (strain FB24), this protein is L-arabinose isomerase.